A 382-amino-acid polypeptide reads, in one-letter code: Glutamyl-tRNA reductase (382 aa).

Residues 38 to 41 (TCNR), S85, 90 to 92 (ENQ), and Q96 each bind substrate. C39 functions as the Nucleophile in the catalytic mechanism. Residue 164-169 (GAGEMG) participates in NADP(+) binding.

This sequence belongs to the glutamyl-tRNA reductase family. In terms of assembly, homodimer.

It catalyses the reaction (S)-4-amino-5-oxopentanoate + tRNA(Glu) + NADP(+) = L-glutamyl-tRNA(Glu) + NADPH + H(+). It participates in porphyrin-containing compound metabolism; protoporphyrin-IX biosynthesis; 5-aminolevulinate from L-glutamyl-tRNA(Glu): step 1/2. Its function is as follows. Catalyzes the NADPH-dependent reduction of glutamyl-tRNA(Glu) to glutamate 1-semialdehyde (GSA). This chain is Glutamyl-tRNA reductase, found in Methanococcus maripaludis (strain C5 / ATCC BAA-1333).